The following is a 501-amino-acid chain: Glycerol kinase (501 aa).

Residue Thr12 participates in ADP binding. 3 residues coordinate ATP: Thr12, Thr13, and Ser14. Thr12 provides a ligand contact to sn-glycerol 3-phosphate. Arg16 is a binding site for ADP. Sn-glycerol 3-phosphate-binding residues include Arg82, Glu83, Tyr134, and Asp244. Glycerol contacts are provided by Arg82, Glu83, Tyr134, Asp244, and Gln245. Thr266 and Gly310 together coordinate ADP. ATP-binding residues include Thr266, Gly310, Gln314, and Gly411. ADP is bound by residues Gly411 and Asn415.

It belongs to the FGGY kinase family.

It carries out the reaction glycerol + ATP = sn-glycerol 3-phosphate + ADP + H(+). The protein operates within polyol metabolism; glycerol degradation via glycerol kinase pathway; sn-glycerol 3-phosphate from glycerol: step 1/1. Inhibited by fructose 1,6-bisphosphate (FBP). Functionally, key enzyme in the regulation of glycerol uptake and metabolism. Catalyzes the phosphorylation of glycerol to yield sn-glycerol 3-phosphate. This chain is Glycerol kinase, found in Methylobacterium radiotolerans (strain ATCC 27329 / DSM 1819 / JCM 2831 / NBRC 15690 / NCIMB 10815 / 0-1).